A 357-amino-acid chain; its full sequence is MATPAVPVSAPPATPTPVPAAAPASVPAPTPAPAAAPVPAAAPASSSDPAAAAAATAAPGQTPASAQAPAQTPAPALPGPALPGPFPGGRVVRLHPVILASIVDSYERRNEGAARVIGTLLGTVDKHSVEVTNCFSVPHNESEDEVAVDMEFAKNMYELHKKVSPNELILGWYATGHDITEHSVLIHEYYSREAPNPIHLTVDTSLQNGRMSIKAYVSTLMGVPGRTMGVMFTPLTVKYAYYDTERIGVDLIMKTCFSPNRVIGLSSDLQQVGGASARIQDALSTVLQYAEDVLSGKVSADNTVGRFLMSLVNQVPKIVPDDFETMLNSNINDLLMVTYLANLTQSQIALNEKLVNL.

The segment at 1–82 (MATPAVPVSA…PAPALPGPAL (82 aa)) is disordered. Ala2 is subject to N-acetylalanine. The span at 9-36 (SAPPATPTPVPAAAPASVPAPTPAPAAA) shows a compositional bias: pro residues. The span at 37–74 (PVPAAAPASSSDPAAAAAATAAPGQTPASAQAPAQTPA) shows a compositional bias: low complexity. At Ser46 the chain carries Phosphoserine; by CDK11; in vitro. The MPN domain occupies 92–222 (VRLHPVILAS…IKAYVSTLMG (131 aa)). Lys238 carries the post-translational modification N6-acetyllysine. A Phosphoserine modification is found at Ser258.

It belongs to the eIF-3 subunit F family. As to quaternary structure, component of the eukaryotic translation initiation factor 3 (eIF-3) complex, which is composed of 13 subunits: EIF3A, EIF3B, EIF3C, EIF3D, EIF3E, EIF3F, EIF3G, EIF3H, EIF3I, EIF3J, EIF3K, EIF3L and EIF3M. The eIF-3 complex appears to include 3 stable modules: module A is composed of EIF3A, EIF3B, EIF3G and EIF3I; module B is composed of EIF3F, EIF3H, and EIF3M; and module C is composed of EIF3C, EIF3D, EIF3E, EIF3K and EIF3L. EIF3C of module C binds EIF3B of module A and EIF3H of module B, thereby linking the three modules. EIF3J is a labile subunit that binds to the eIF-3 complex via EIF3B. The eIF-3 complex interacts with RPS6KB1 under conditions of nutrient depletion. Mitogenic stimulation leads to binding and activation of a complex composed of MTOR and RPTOR, leading to phosphorylation and release of RPS6KB1 and binding of EIF4B to eIF-3. Interacts with RNF139; the interaction leads to protein translation inhibitions in a ubiquitination-dependent manner. Interacts with DTX1, the interaction is required for deubiquitinating activity towards NOTCH1. In terms of processing, phosphorylation is enhanced upon serum stimulation. Phosphorylated during apoptosis by caspase-processed CDK11.

Its subcellular location is the cytoplasm. The catalysed reaction is Thiol-dependent hydrolysis of ester, thioester, amide, peptide and isopeptide bonds formed by the C-terminal Gly of ubiquitin (a 76-residue protein attached to proteins as an intracellular targeting signal).. Functionally, component of the eukaryotic translation initiation factor 3 (eIF-3) complex, which is required for several steps in the initiation of protein synthesis. The eIF-3 complex associates with the 40S ribosome and facilitates the recruitment of eIF-1, eIF-1A, eIF-2:GTP:methionyl-tRNAi and eIF-5 to form the 43S pre-initiation complex (43S PIC). The eIF-3 complex stimulates mRNA recruitment to the 43S PIC and scanning of the mRNA for AUG recognition. The eIF-3 complex is also required for disassembly and recycling of post-termination ribosomal complexes and subsequently prevents premature joining of the 40S and 60S ribosomal subunits prior to initiation. The eIF-3 complex specifically targets and initiates translation of a subset of mRNAs involved in cell proliferation, including cell cycling, differentiation and apoptosis, and uses different modes of RNA stem-loop binding to exert either translational activation or repression. In terms of biological role, deubiquitinates activated NOTCH1, promoting its nuclear import, thereby acting as a positive regulator of Notch signaling. The chain is Eukaryotic translation initiation factor 3 subunit F from Homo sapiens (Human).